Consider the following 117-residue polypeptide: Large ribosomal subunit protein bL19 (117 aa).

Belongs to the bacterial ribosomal protein bL19 family.

Its function is as follows. This protein is located at the 30S-50S ribosomal subunit interface and may play a role in the structure and function of the aminoacyl-tRNA binding site. The protein is Large ribosomal subunit protein bL19 of Shewanella frigidimarina (strain NCIMB 400).